A 636-amino-acid chain; its full sequence is ATP-dependent zinc metalloprotease FtsH (636 aa).

Over M1–M12 the chain is Cytoplasmic. A helical transmembrane segment spans residues G13 to I33. Topologically, residues R34–L104 are periplasmic. The helical transmembrane segment at L105 to F125 threads the bilayer. At M126–E636 the chain is on the cytoplasmic side. Position 197 to 204 (G197 to T204) interacts with ATP. A Zn(2+)-binding site is contributed by H419. E420 is a catalytic residue. Positions 423 and 497 each coordinate Zn(2+).

This sequence in the central section; belongs to the AAA ATPase family. The protein in the C-terminal section; belongs to the peptidase M41 family. As to quaternary structure, homohexamer. Zn(2+) is required as a cofactor.

It localises to the cell inner membrane. Functionally, acts as a processive, ATP-dependent zinc metallopeptidase for both cytoplasmic and membrane proteins. Plays a role in the quality control of integral membrane proteins. The protein is ATP-dependent zinc metalloprotease FtsH of Neorickettsia risticii (strain Illinois).